Consider the following 499-residue polypeptide: Alpha-L-arabinofuranosidase B (499 aa).

A signal peptide spans 1-17 (MFSRRNLLALGLAATVS). The catalytic stretch occupies residues 18–335 (AGPCDIYEAG…ENIVAAKYVV (318 aa)). 3 disulfides stabilise this stretch: C21-C31, C81-C86, and C176-C177. An N-linked (GlcNAc...) asparagine glycan is attached at N83. N-linked (GlcNAc...) asparagine glycosylation occurs at N202. D219 serves as a coordination point for substrate. E221 serves as the catalytic Nucleophile. 3 residues coordinate substrate: N222, N223, and G296. Residue D297 is the Proton donor of the active site. Residues 336-499 (GSLVSGPSFT…SFEIETAFAS (164 aa)) are ABD. C401 and C439 are oxidised to a cystine. Positions 416, 418, 419, 435, 463, 465, 468, and 488 each coordinate substrate.

The protein belongs to the glycosyl hydrolase 54 family.

Its subcellular location is the secreted. It carries out the reaction Hydrolysis of terminal non-reducing alpha-L-arabinofuranoside residues in alpha-L-arabinosides.. Its pathway is glycan metabolism; L-arabinan degradation. Its function is as follows. Alpha-L-arabinofuranosidase involved in the degradation of arabinoxylan, a major component of plant hemicellulose. Able to hydrolyze 1,5-, 1,3- and 1,2-alpha-linkages not only in L-arabinofuranosyl oligosaccharides, but also in polysaccharides containing terminal non-reducing L-arabinofuranoses in side chains, like L-arabinan, arabinogalactan and arabinoxylan. The polypeptide is Alpha-L-arabinofuranosidase B (abfB) (Aspergillus kawachii (strain NBRC 4308) (White koji mold)).